Consider the following 130-residue polypeptide: Small ribosomal subunit protein uS8 (130 aa).

It belongs to the universal ribosomal protein uS8 family. In terms of assembly, part of the 30S ribosomal subunit. Contacts proteins S5 and S12.

Functionally, one of the primary rRNA binding proteins, it binds directly to 16S rRNA central domain where it helps coordinate assembly of the platform of the 30S subunit. This Pseudoalteromonas atlantica (strain T6c / ATCC BAA-1087) protein is Small ribosomal subunit protein uS8.